A 172-amino-acid polypeptide reads, in one-letter code: Oleosin 18 kDa (172 aa).

N-acetylalanine is present on Ala2. The segment at 2 to 38 (ADRDRAGQYYQQQRGQVGETVKGILPEKAPSASQALT) is polar. The interval 39–110 (VATLFPLGGL…GGLSSLTFLA (72 aa)) is hydrophobic. Helical transmembrane passes span 42–62 (LFPL…ASVV), 70–90 (VFLI…LAVA), and 91–111 (GFLT…FLAN). Residues 147-172 (HAIQGRADQAGTGAGAGGGAGTKTSS) are disordered. Residues 158 to 172 (TGAGAGGGAGTKTSS) show a composition bias toward gly residues.

Belongs to the oleosin family.

The protein resides in the lipid droplet. Its subcellular location is the membrane. Functionally, may have a structural role to stabilize the lipid body during desiccation of the seed by preventing coalescence of the oil. Probably interacts with both lipid and phospholipid moieties of lipid bodies. May also provide recognition signals for specific lipase anchorage in lipolysis during seedling growth. The chain is Oleosin 18 kDa (OLE18) from Oryza sativa subsp. indica (Rice).